The sequence spans 227 residues: PKHD-type hydroxylase Patl_2273 (227 aa).

In terms of domain architecture, Fe2OG dioxygenase spans 78 to 178; sequence KIYPPKFNRY…RTASFFWIES (101 aa). Residues H96, D98, and H159 each coordinate Fe cation. R169 provides a ligand contact to 2-oxoglutarate.

Fe(2+) serves as cofactor. L-ascorbate is required as a cofactor.

In Pseudoalteromonas atlantica (strain T6c / ATCC BAA-1087), this protein is PKHD-type hydroxylase Patl_2273.